A 321-amino-acid chain; its full sequence is MTRPPLVRGIFSLGLSVAVLKGVEKTVRKHLERQGWIEPQKVDYELIFTIDRLKNLVDNKREALTAEQPDAGELSWRKVFNFISRQSSELDARIYVLILLLSFLLPIAWTVLDGDRETTLEDKDNDCNVDLIENERRLKHYNDGERAVLQFGKNRSEPIILSYKDMNVLEGEHEFTSKEEHSNSHLTSKSENALSQVGSEDLLGCHLEKQLEEDKNEPNGEADGEDDNNREKDCSSSSEVESQSKCRKESTAEPDSLSRDTRTTSSLKSSTSFPISFKGSIDLKSLNQPSSLLHIQVSPTKSSNLDAQVNTEQAYSQPFRY.

Positions M1–G22 are cleaved as a signal peptide. The tract at residues E73–N125 is TSC13-binding. Residues I94–G114 form a helical membrane-spanning segment. An OSH1-binding region spans residues K139–S195. Phosphoserine is present on S156. Basic and acidic residues predominate over residues E174 to N183. Residues E174 to L194 are disordered. Polar residues predominate over residues S184 to L194. S199 carries the phosphoserine modification. The segment at Q210 to I275 is disordered. The segment at D233 to Y321 is VAC8-binding. The span at S242–R262 shows a compositional bias: basic and acidic residues. Residues T263–S272 show a composition bias toward low complexity. Residues S285 and S298 each carry the phosphoserine modification. The segment at P299–Y321 is disordered.

As to quaternary structure, interacts with OSH1, TSC13 and VAC8.

It is found in the nucleus outer membrane. Functionally, involved in the formation of nucleus-vacuole (NV) junctions during piecemeal microautophagy of the nucleus (PMN). NV junctions are interorganelle interfaces mediated by NVJ1 in the nuclear envelope and VAC8 on the vacuole membrane. Together, NVJ1 and VAC8 form Velcro-like patches through which teardrop-like portions of the nucleus are pinched off into the vacuolar lumen and degraded by the PMN process. Also acts as an outer-nuclear membrane receptor for OSH1 and TSC13. This Saccharomyces cerevisiae (strain YJM789) (Baker's yeast) protein is Nucleus-vacuole junction protein 1 (NVJ1).